The following is a 118-amino-acid chain: Eukaryotic translation initiation factor 4E-binding protein 1 (118 aa).

2 stretches are compositionally biased toward polar residues: residues 1–12 (MSGGSSCSQTPS) and 34–48 (YSTT…TTPG). Disordered stretches follow at residues 1–20 (MSGG…ATRR) and 25–48 (DGVQ…TTPG). Residue Ser2 is modified to N-acetylserine. Residue Thr37 is modified to Phosphothreonine; by MTOR. A Phosphothreonine modification is found at Thr41. The residue at position 44 (Ser44) is a Phosphoserine. Thr46 carries the phosphothreonine; by MTOR modification. The residue at position 50 (Thr50) is a Phosphothreonine. Position 54 is a phosphotyrosine (Tyr54). The short motif at 54-60 (YDRKFLM) is the YXXXXLphi motif element. Residue Lys57 forms a Glycyl lysine isopeptide (Lys-Gly) (interchain with G-Cter in ubiquitin) linkage. Positions 64–118 (NSPVTKTPPRDLPTIPGVTSPSSDEPPMEASQSHLRNSPEDKRAGGEESQFEMDI) are disordered. Ser65 carries the post-translational modification Phosphoserine; by DYRK2, MAPK1, MAPK3 and MTOR. Residue Thr70 is modified to Phosphothreonine; by MTOR. Residue Thr77 is modified to Phosphothreonine. Phosphoserine occurs at positions 83 and 96. Residues 100–109 (NSPEDKRAGG) show a composition bias toward basic and acidic residues. At Ser101 the chain carries Phosphoserine; by DYRK2. Ser112 is subject to Phosphoserine. Positions 114-118 (FEMDI) match the TOS motif motif.

Belongs to the eIF4E-binding protein family. As to quaternary structure, hypophosphorylated EIF4EBP1 competes with EIF4G1/EIF4G3 to interact with EIF4E; insulin stimulated MAP-kinase (MAPK1 and MAPK3) or mTORC1 phosphorylation of EIF4EBP1 causes dissociation of the complex allowing EIF4G1/EIF4G3 to bind and consequent initiation of translation. Interacts (via TOS motif) with RPTOR; promoting phosphorylation by mTORC1. Post-translationally, phosphorylated on serine and threonine residues in response to insulin, EGF and PDGF. Phosphorylation at Thr-37, Thr-46, Ser-65 and Thr-70, corresponding to the hyperphosphorylated form, is regulated by mTORC1 and abolishes binding to EIF4E. Ubiquitinated: when eIF4E levels are low, hypophosphorylated form is ubiquitinated by the BCR(KLHL25) complex, leading to its degradation and serving as a homeostatic mechanism to maintain translation and prevent eIF4E inhibition when eIF4E levels are low. Not ubiquitinated when hyperphosphorylated (at Thr-37, Thr-46, Ser-65 and Thr-70) or associated with eIF4E.

The protein localises to the cytoplasm. Its subcellular location is the nucleus. Repressor of translation initiation that regulates EIF4E activity by preventing its assembly into the eIF4F complex: hypophosphorylated form competes with EIF4G1/EIF4G3 and strongly binds to EIF4E, leading to repress translation. In contrast, hyperphosphorylated form dissociates from EIF4E, allowing interaction between EIF4G1/EIF4G3 and EIF4E, leading to initiation of translation. Mediates the regulation of protein translation by hormones, growth factors and other stimuli that signal through the MAP kinase and mTORC1 pathways. The chain is Eukaryotic translation initiation factor 4E-binding protein 1 (EIF4EBP1) from Homo sapiens (Human).